The sequence spans 280 residues: Probable inactive shikimate kinase like 1, chloroplastic (280 aa).

The transit peptide at 1-54 (MEIFSASASLTLTGFVPRLLPLLSPQARTTLCKPLLSSSSTRLISCHSRIAPSR) directs the protein to the chloroplast.

The protein belongs to the shikimate kinase family.

It localises to the plastid. It is found in the chloroplast. Functionally, required for chloroplast biogenesis. This is Probable inactive shikimate kinase like 1, chloroplastic (SKL1) from Arabidopsis thaliana (Mouse-ear cress).